Consider the following 400-residue polypeptide: Signal recognition particle receptor FtsY (400 aa).

2 disordered regions span residues 12–37 (TKKT…QEEQ) and 51–86 (NKIK…KDKK). Residues 51 to 72 (NKIKKTKTSETKKQEKPIETLK) are compositionally biased toward basic and acidic residues. Residues 192-199 (GVNGTGKT), 278-282 (DTAGR), and 342-345 (TKMD) contribute to the GTP site.

The protein belongs to the GTP-binding SRP family. FtsY subfamily. As to quaternary structure, part of the signal recognition particle protein translocation system, which is composed of SRP and FtsY.

It localises to the cell membrane. The protein localises to the cytoplasm. The catalysed reaction is GTP + H2O = GDP + phosphate + H(+). Its function is as follows. Involved in targeting and insertion of nascent membrane proteins into the cytoplasmic membrane. Acts as a receptor for the complex formed by the signal recognition particle (SRP) and the ribosome-nascent chain (RNC). In Mycoplasma mycoides subsp. mycoides SC (strain CCUG 32753 / NCTC 10114 / PG1), this protein is Signal recognition particle receptor FtsY.